The primary structure comprises 318 residues: TPR repeat-containing protein MJ0940 (318 aa).

8 TPR repeats span residues 17–50 (SLTY…NPDF), 84–117 (PVAY…EEKF), 119–151 (TAFF…APNF), 152–185 (IPAY…KEND), 186–219 (TNAI…LNVT), 221–254 (IEVI…RPDD), 255–288 (ASLW…MPHH), and 289–318 (TKAL…ALDR).

This chain is TPR repeat-containing protein MJ0940, found in Methanocaldococcus jannaschii (strain ATCC 43067 / DSM 2661 / JAL-1 / JCM 10045 / NBRC 100440) (Methanococcus jannaschii).